Reading from the N-terminus, the 624-residue chain is Actin-related protein 8 (624 aa).

Methionine 1 is subject to N-acetylmethionine. Positions 1-25 (MTQAEKGDAENGKEKGGEKEKEQRG) are enriched in basic and acidic residues. The segment at 1–29 (MTQAEKGDAENGKEKGGEKEKEQRGVKRP) is disordered. ATP-binding residues include serine 55 and threonine 56. The residue at position 132 (serine 132) is a Phosphoserine. 283–286 (DVGD) contributes to the ATP binding site. Residue serine 412 is modified to Phosphoserine. Residues 430–462 (SKQEQSAKATADRKSASKPIGFEGDLRGQSSDL) are disordered.

Belongs to the actin family. ARP8 subfamily. Component of the chromatin remodeling INO80 complex; specifically part of a complex module associated with the DBINO domain of INO80. Exists as monomers and dimers, but the dimer is most probably the biologically relevant form required for stable interactions with histones that exploits the twofold symmetry of the nucleosome core.

The protein resides in the nucleus. It localises to the chromosome. In terms of biological role, plays an important role in the functional organization of mitotic chromosomes. Exhibits low basal ATPase activity, and unable to polymerize. Functionally, proposed core component of the chromatin remodeling INO80 complex which is involved in transcriptional regulation, DNA replication and probably DNA repair. Required for the recruitment of INO80 (and probably the INO80 complex) to sites of DNA damage Strongly prefer nucleosomes and H3-H4 tetramers over H2A-H2B dimers, suggesting it may act as a nucleosome recognition module within the complex. The polypeptide is Actin-related protein 8 (Actr8) (Mus musculus (Mouse)).